A 126-amino-acid polypeptide reads, in one-letter code: Flagellar protein FliT (126 aa).

The tract at residues 1-50 is required for homodimerization; it reads MASPHRLLKDYQQLLSLSQKILHLAVNGQWDTLVEQEIVYVQSVEGLVNT. Residues 60-98 are fliD binding; sequence MRLHLRQILQEVMDNEAKVKQLLQKRMDELSSLMGQSLK.

Belongs to the FliT family. In terms of assembly, homodimer. Interacts with FliD and FlhC.

The protein resides in the cytoplasm. The protein localises to the cytosol. In terms of biological role, dual-function protein that regulates the transcription of class 2 flagellar operons and that also acts as an export chaperone for the filament-capping protein FliD. As a transcriptional regulator, acts as an anti-FlhDC factor; it directly binds FlhC, thus inhibiting the binding of the FlhC/FlhD complex to class 2 promoters, resulting in decreased expression of class 2 flagellar operons. As a chaperone, effects FliD transition to the membrane by preventing its premature polymerization, and by directing it to the export apparatus. In Pectobacterium carotovorum subsp. carotovorum (strain PC1), this protein is Flagellar protein FliT.